The chain runs to 254 residues: 5-oxoprolinase subunit A (254 aa).

The protein belongs to the LamB/PxpA family. Forms a complex composed of PxpA, PxpB and PxpC.

It catalyses the reaction 5-oxo-L-proline + ATP + 2 H2O = L-glutamate + ADP + phosphate + H(+). Catalyzes the cleavage of 5-oxoproline to form L-glutamate coupled to the hydrolysis of ATP to ADP and inorganic phosphate. The sequence is that of 5-oxoprolinase subunit A from Heliobacterium modesticaldum (strain ATCC 51547 / Ice1).